Consider the following 272-residue polypeptide: Large ribosomal subunit protein uL2 (272 aa).

The disordered stretch occupies residues Gly222–Lys272. A compositionally biased stretch (basic and acidic residues) spans Thr263 to Lys272.

This sequence belongs to the universal ribosomal protein uL2 family. As to quaternary structure, part of the 50S ribosomal subunit. Forms a bridge to the 30S subunit in the 70S ribosome.

Functionally, one of the primary rRNA binding proteins. Required for association of the 30S and 50S subunits to form the 70S ribosome, for tRNA binding and peptide bond formation. It has been suggested to have peptidyltransferase activity; this is somewhat controversial. Makes several contacts with the 16S rRNA in the 70S ribosome. In Thermodesulfovibrio yellowstonii (strain ATCC 51303 / DSM 11347 / YP87), this protein is Large ribosomal subunit protein uL2.